Consider the following 221-residue polypeptide: MILVLAESALELVPREIWSHPAVVADARRRGKKPGGILLDRSRHHPAMAVLLDSRRRGRPDIVHQALLVFQYSLLAARGLGRMYIHTLGDYVISVDPSTRVPKNYNNFVSLVEQLFATGRVPPEGRPLMEIRRQGLRDLLTELGGRWVVMHEAGLRIPLVQLGKEVLDSVVVIGGFPHGDFNNKWVLEEAAARYSLGEVAMDAAQVACRVVAAAEAAAGLL.

Residues glycine 174, glycine 179, and 196 to 201 contribute to the S-adenosyl-L-methionine site; that span reads LGEVAM.

It belongs to the class IV-like SAM-binding methyltransferase superfamily. RNA methyltransferase NEP1 family. Homodimer.

It carries out the reaction a pseudouridine in rRNA + S-adenosyl-L-methionine = an N(1)-methylpseudouridine in rRNA + S-adenosyl-L-homocysteine + H(+). In terms of biological role, methyltransferase involved in ribosomal biogenesis. Specifically catalyzes the N1-methylation of the pseudouridine corresponding to position 914 in M.jannaschii 16S rRNA. The protein is Ribosomal RNA small subunit methyltransferase Nep1 of Pyrobaculum arsenaticum (strain DSM 13514 / JCM 11321 / PZ6).